A 92-amino-acid chain; its full sequence is C-C motif chemokine 4 (92 aa).

Residues 1–23 form the signal peptide; the sequence is MKLCVSAFSLLLLVAAFCDSVLS. 2 disulfides stabilise this stretch: C34–C58 and C35–C74.

It belongs to the intercrine beta (chemokine CC) family. In terms of assembly, homodimer.

Its subcellular location is the secreted. Monokine with inflammatory and chemokinetic properties. The polypeptide is C-C motif chemokine 4 (Ccl4) (Rattus norvegicus (Rat)).